Here is a 1191-residue protein sequence, read N- to C-terminus: MLSSNTRGDCSDTAEEMTVDSRDSKDLSAQDIGEQKQQQMEDQLEDQLNDSRDPQNNNNNIDDDADEDAEFEEPEKANPQQDQDLGETEMEQEHDLQQEDLQQELPANSPSTPPRSPSSPQLIPKLEQPATPPSEPEASPCPSPSPCPTPKYPKVRLNALLASDPALKPDAKELTLPDSRLLAPPPLVKPDTQAQPEVAEPLLKPARFMCLPCGIAFSSPSTLEAHQAYYCSHRIKDTDEAGSDKSGAGGSGATAGDAAGLTGGSTEPPAKMARTGKQYGCTQCSYSADKKVSLNRHMRMHQTSPAAPTLAGLPSLLQNGIAPPGVTPNPMEDSSSQQTDRYCSHCDIRFNNIKTYRAHKQHYCSSRRPEGQLTPKPDASPGAGSGPGSAGGSIGVSAQAATPGKLSPQARNKTPTPAMVAVAAAAAAAAASLQATPHSHPPFLALPTHPIIIVPCSLIRAASFIPGPLPTPNSGIVNPETTCFTVDNGTIKPLATALVGATLEPERPSAPSSAAEATEAKSSPPEPKRKEAGLTRESAPLDLSLRRSPITLNSLSLRQRQLRNALLDVEEVLLAGVGTGKENVETPRGGGSVTPEQIVCAPSLPSSPSMSPSPKRRAISPRSSGAGSASSMSPPGLNVAVPHLLDMRSMLPADFGLSESLLAKTNPELALKLAAAAAAAAVAGSSGAAAFPPASLPAQTSSGNPGSGGSAGGAQQPQIYVKKGVSKCMECNIVFCKYENYLAHKQHYCSARSQEGASEVDVKSAVSPSIAGAGGLGAGAAEAASSVETTPVAYQQLICAACGIKYTSLDNLRAHQNYYCPKGGAVAAPAATPTDPGQLGMPKEKCGKCKTLHEIGLPCPPPVANPLAAPTVNPQPATNSLNKCPVCGVVSPTAALAKKHMEMHGTVKAYRCSICQYKGNTLRGMRTHIRTHFDKKTSDVNEELYMTCIFEEDASALSQELVTPTGASTTTGHDSMDHPSQMFNCDYCNYVSTYKGNVLRHMKLMHPHVAINSPSISPDTRDQDVTSNPTTNQHSNSDVSNGEAPSFHIKSEPLDPPPTVNLVHENNNSPIATPHIKAEPIEVGADAAPGGLVPPMTSPLGNSSSVAAAAAAAAEVMKKYCSTCDISFNYVKTYLAHKQFYCKNKPIRPEASDSPSPNHLGGGVAVGLGIGGLVGGHGQQKNKENLQEAAI.

2 disordered regions span residues 1-153 (MLSS…PKYP) and 169-194 (PDAK…DTQA). Over residues 19–28 (VDSRDSKDLS) the composition is skewed to basic and acidic residues. Residues 61-73 (IDDDADEDAEFEE) show a composition bias toward acidic residues. Phosphoserine is present on residues S116 and S118. Residues 130-151 (ATPPSEPEASPCPSPSPCPTPK) show a composition bias toward pro residues. The CCHC FOG-type 1 zinc finger occupies 202–235 (LLKPARFMCLPCGIAFSSPSTLEAHQAYYCSHRI). Zn(2+) is bound by residues C210, C213, H226, and C231. Residues 239-274 (DEAGSDKSGAGGSGATAGDAAGLTGGSTEPPAKMAR) are disordered. Positions 254–266 (TAGDAAGLTGGST) are enriched in low complexity. Residues 279-301 (YGCTQCSYSADKKVSLNRHMRMH) form a C2H2-type 1 zinc finger. The disordered stretch occupies residues 304 to 338 (SPAAPTLAGLPSLLQNGIAPPGVTPNPMEDSSSQQ). The CCHC FOG-type 2 zinc-finger motif lies at 335 to 368 (SSQQTDRYCSHCDIRFNNIKTYRAHKQHYCSSRR). Residues C343, C346, H359, and C364 each contribute to the Zn(2+) site. Disordered regions lie at residues 361–413 (QHYC…ARNK), 504–540 (EPER…ESAP), and 601–635 (APSL…MSPP). Residues 383–394 (AGSGPGSAGGSI) are compositionally biased toward gly residues. 3 stretches are compositionally biased toward low complexity: residues 509–523 (SAPS…AKSS), 602–613 (PSLPSSPSMSPS), and 620–635 (SPRS…MSPP). 2 CCHC FOG-type zinc fingers span residues 720–753 (YVKK…SARS) and 791–824 (PVAY…PKGG). Residues C728, C731, H744, C749, C799, C802, H815, and C820 each contribute to the Zn(2+) site. 3 C2H2-type zinc fingers span residues 882-907 (NKCP…HGTV), 910-932 (YRCS…IRTH), and 983-1006 (FNCD…KLMH). The segment at 1011–1073 (INSPSISPDT…HENNNSPIAT (63 aa)) is disordered. S1013, S1015, and S1017 each carry phosphoserine. Residues 1025–1040 (VTSNPTTNQHSNSDVS) are compositionally biased toward polar residues. The segment at 1113 to 1146 (AAEVMKKYCSTCDISFNYVKTYLAHKQFYCKNKP) adopts a CCHC FOG-type 5 zinc-finger fold. Residues C1121, C1124, H1137, and C1142 each contribute to the Zn(2+) site. Residue S1156 is modified to Phosphoserine.

This sequence belongs to the FOG (Friend of GATA) family. In terms of assembly, interacts with pnr, although weak this interaction is essential. Interacts with the isoform SrpNC of srp. Interacts with CtBP corepressor. First expressed in stage 5 at high levels in the primordium of the amnioserosa. Also expressed in germ band extending embryos in cells of the developing anterior and posterior midgut and in hemocyte precursors present in the cephalic mesoderm. In embryonic stage 8, it is expressed in blood cell precursors. By stage 10, it is expressed in hemocyte precursors that have spread throughout the lateral and ventral head mesoderm. By stage 11, it is expressed in the dorsal ectoderm and in precursor cells of the hemocytes and fat body. As embryogenesis proceeds, it is also expressed in stage 13 plasmatocytes migrating throughout the head mesoderm and down the ventral midline. By late embryogenesis, expression strongly decreases but remains in the dorsal ectoderm during dorsal closure, in cells within, or associated with, the central nervous system, and in plasmatocytes circulating throughout the embryonic hemolymph. During larval development, it is expressed in primary and secondary lobes of lymph glands. Expressed in the dorsal part of the thoracic imaginal disk.

The protein localises to the nucleus. Its function is as follows. Transcription regulator that modulates expression mediated by transcription factors of the GATA family such as pnr and srp. Represses transcription of proneural achaete-scute complex (AS-C), which is usually activated by pnr. Involved in cardiogenesis, blood, and eye development. During hematopoiesis, it is required to restrict the number of crystal cells, probably via its interaction with the isoform SrpNC of srp. Negatively regulates expression of sr. Probably acts by interacting with the GATA-type zinc finger of proteins such as pnr and srp, possibly antagonizing the interaction between the GATA-type zinc finger and some cofactor. The chain is Zinc finger protein ush (ush) from Drosophila melanogaster (Fruit fly).